The following is a 233-amino-acid chain: DNA repair protein RecO (233 aa).

This sequence belongs to the RecO family.

In terms of biological role, involved in DNA repair and RecF pathway recombination. The polypeptide is DNA repair protein RecO (Psychromonas ingrahamii (strain DSM 17664 / CCUG 51855 / 37)).